A 310-amino-acid polypeptide reads, in one-letter code: NAD kinase 1 (310 aa).

Catalysis depends on aspartate 68, which acts as the Proton acceptor. NAD(+) contacts are provided by residues aspartate 68–glycine 69, asparagine 145–glutamate 146, arginine 156, histidine 175, and aspartate 177.

Belongs to the NAD kinase family. Requires a divalent metal cation as cofactor.

Its subcellular location is the cytoplasm. It catalyses the reaction NAD(+) + ATP = ADP + NADP(+) + H(+). Functionally, involved in the regulation of the intracellular balance of NAD and NADP, and is a key enzyme in the biosynthesis of NADP. Catalyzes specifically the phosphorylation on 2'-hydroxyl of the adenosine moiety of NAD to yield NADP. The polypeptide is NAD kinase 1 (Gloeobacter violaceus (strain ATCC 29082 / PCC 7421)).